Consider the following 89-residue polypeptide: Small ribosomal subunit protein bS20 (89 aa).

2 disordered regions span residues M1–K25 and K69–S89. Residues A7–H20 are compositionally biased toward basic residues.

The protein belongs to the bacterial ribosomal protein bS20 family.

In terms of biological role, binds directly to 16S ribosomal RNA. The protein is Small ribosomal subunit protein bS20 of Geobacillus thermodenitrificans (strain NG80-2).